The sequence spans 241 residues: Ribonuclease PH (241 aa).

Residues Arg89 and 127-129 (GTR) each bind phosphate.

Belongs to the RNase PH family. Homohexameric ring arranged as a trimer of dimers.

It carries out the reaction tRNA(n+1) + phosphate = tRNA(n) + a ribonucleoside 5'-diphosphate. Functionally, phosphorolytic 3'-5' exoribonuclease that plays an important role in tRNA 3'-end maturation. Removes nucleotide residues following the 3'-CCA terminus of tRNAs; can also add nucleotides to the ends of RNA molecules by using nucleoside diphosphates as substrates, but this may not be physiologically important. Probably plays a role in initiation of 16S rRNA degradation (leading to ribosome degradation) during starvation. The protein is Ribonuclease PH of Xylella fastidiosa (strain 9a5c).